Reading from the N-terminus, the 310-residue chain is tRNA-cytidine(32) 2-sulfurtransferase (310 aa).

The short motif at 47 to 52 (SGGKDS) is the PP-loop motif element. Residues Cys-122, Cys-125, and Cys-213 each coordinate [4Fe-4S] cluster.

This sequence belongs to the TtcA family. As to quaternary structure, homodimer. Mg(2+) serves as cofactor. The cofactor is [4Fe-4S] cluster.

The protein localises to the cytoplasm. It carries out the reaction cytidine(32) in tRNA + S-sulfanyl-L-cysteinyl-[cysteine desulfurase] + AH2 + ATP = 2-thiocytidine(32) in tRNA + L-cysteinyl-[cysteine desulfurase] + A + AMP + diphosphate + H(+). It functions in the pathway tRNA modification. Functionally, catalyzes the ATP-dependent 2-thiolation of cytidine in position 32 of tRNA, to form 2-thiocytidine (s(2)C32). The sulfur atoms are provided by the cysteine/cysteine desulfurase (IscS) system. The protein is tRNA-cytidine(32) 2-sulfurtransferase of Serratia proteamaculans (strain 568).